The following is a 767-amino-acid chain: General transcription and DNA repair factor IIH helicase/translocase subunit XPB1 (767 aa).

The tract at residues 1-51 (MGNGERGRPNKKMKYGGKDDQKMKNIQNAEDYYDDADEDSRDGEGEEKKRD) is disordered. A compositionally biased stretch (acidic residues) spans 31–41 (DYYDDADEDSR). Residues 42–51 (DGEGEEKKRD) are compositionally biased toward basic and acidic residues. The region spanning 293-455 (MFGNGRARSG…DLNFLIGPKL (163 aa)) is the Helicase ATP-binding domain. ATP is bound at residue 306 to 313 (LPCGAGKS). Residues 408–411 (DEVH) carry the DEVH box motif. The Helicase C-terminal domain occupies 510-676 (RACEFLIRFH…SLPPPDAGSS (167 aa)). The interval 742–767 (RHKSGQQFKKPKDPTKRHNLFKKRYV) is disordered. The short motif at 750-766 (KKPKDPTKRHNLFKKRY) is the Nuclear localization signal element. Residues 758 to 767 (RHNLFKKRYV) are compositionally biased toward basic residues.

Belongs to the helicase family. RAD25/XPB subfamily. In terms of assembly, component of the 7-subunit TFIIH core complex composed of XPB, XPD, TFB1/GTF2H1, GTF2H2/P44, TFB4/GTF2H3, TFB2/GTF2H4 and TFB5/GTF2H5, which is active in NER. The core complex associates with the 3-subunit CDK-activating kinase (CAK) module composed of CYCH1/cyclin H1, CDKD and MAT1/At4g30820 to form the 10-subunit holoenzyme (holo-TFIIH) active in transcription. In terms of tissue distribution, expressed ubiquitously.

The protein resides in the nucleus. It carries out the reaction Couples ATP hydrolysis with the unwinding of duplex DNA by translocating in the 3'-5' direction.. The catalysed reaction is ATP + H2O = ADP + phosphate + H(+). In terms of biological role, ATP-dependent 3'-5' DNA helicase/translocase; binds dsDNA rather than ssDNA, unzipping it in a translocase rather than classical helicase activity. Component of the general transcription and DNA repair factor IIH (TFIIH) core complex. When complexed to CDK-activating kinase (CAK), involved in RNA transcription by RNA polymerase II. The ATPase activity of XPB/ERCC3, but not its helicase activity, is required for DNA opening; it may wrap around the damaged DNA wedging it open, causing localized melting and twisting that allows XPD/ERCC2 helicase to anchor. The ATP-dependent helicase activity of XPB/ERCC3 may be required for promoter escape. Also involved in transcription-coupled nucleotide excision repair (NER) of damaged DNA. In NER, TFIIH acts by opening DNA around the lesion to allow the excision of the damaged oligonucleotide and its replacement by a new DNA fragment. The structure of the TFIIH transcription complex differs from the NER-TFIIH complex. Partially complements UV sensitivity of a yeast SSL2 mutation. Required during the early stages of development, including seed germination. In Arabidopsis thaliana (Mouse-ear cress), this protein is General transcription and DNA repair factor IIH helicase/translocase subunit XPB1 (XPB1).